Consider the following 272-residue polypeptide: MSPPLEPHDYIGLSAAAASPTPSSSSCSSSPNPGGEARGPRLTLRLGLPGSESPEREVVAAGLTLGPLPPTTTKAASKRAFPDSSPRHGASSGSVAAAAAACQDKAAPAAAPPAAKAQVVGWPPVRNYRKNTLAASASKGKGEDKGTAEGGPLYVKVSMDGAPYLRKVDLKMYSSYEDLSMALEKMFSCFITGQSGLRKSSNRDRLTNGSKADALQDQEYVLTYEDKDADWMLVGDLPWDLFTTICRKLKIMRGSDAAGIAPRSIEQSGQSR.

The segment at methionine 1–serine 92 is disordered. 2 stretches are compositionally biased toward low complexity: residues serine 14 to proline 33 and proline 40 to glycine 50. The EAR-like (transcriptional repression) signature appears at leucine 44–leucine 48. Residues proline 152–aspartate 256 enclose the PB1 domain.

The protein belongs to the Aux/IAA family. Homodimers and heterodimers. In terms of tissue distribution, highly expressed in roots and flowers. Expressed in shoots.

The protein localises to the nucleus. Aux/IAA proteins are short-lived transcriptional factors that function as repressors of early auxin response genes at low auxin concentrations. The chain is Auxin-responsive protein IAA5 (IAA5) from Oryza sativa subsp. indica (Rice).